The sequence spans 33 residues: Glucagon-2 (33 aa).

Belongs to the glucagon family.

It is found in the secreted. In terms of biological role, promotes hydrolysis of glycogen and lipids, and raises the blood sugar level. This Oreochromis niloticus (Nile tilapia) protein is Glucagon-2 (gcg2).